The sequence spans 71 residues: Translation initiation factor IF-1 (71 aa).

Residues M1–Y71 enclose the S1-like domain.

It belongs to the IF-1 family. In terms of assembly, component of the 30S ribosomal translation pre-initiation complex which assembles on the 30S ribosome in the order IF-2 and IF-3, IF-1 and N-formylmethionyl-tRNA(fMet); mRNA recruitment can occur at any time during PIC assembly.

The protein resides in the cytoplasm. One of the essential components for the initiation of protein synthesis. Stabilizes the binding of IF-2 and IF-3 on the 30S subunit to which N-formylmethionyl-tRNA(fMet) subsequently binds. Helps modulate mRNA selection, yielding the 30S pre-initiation complex (PIC). Upon addition of the 50S ribosomal subunit IF-1, IF-2 and IF-3 are released leaving the mature 70S translation initiation complex. The protein is Translation initiation factor IF-1 of Flavobacterium johnsoniae (strain ATCC 17061 / DSM 2064 / JCM 8514 / BCRC 14874 / CCUG 350202 / NBRC 14942 / NCIMB 11054 / UW101) (Cytophaga johnsonae).